The chain runs to 345 residues: D-fructose 1,6-bisphosphatase class 2/sedoheptulose 1,7-bisphosphatase (345 aa).

Residues aspartate 33, glutamate 57, aspartate 97, and glutamate 100 each coordinate Mn(2+). Residues 100–102 (EGT), tyrosine 131, 176–178 (RPR), and 198–200 (DGD) contribute to the substrate site. Residue glutamate 225 participates in Mn(2+) binding.

This sequence belongs to the FBPase class 2 family. Homotetramer. The cofactor is Mn(2+).

The enzyme catalyses beta-D-fructose 1,6-bisphosphate + H2O = beta-D-fructose 6-phosphate + phosphate. The catalysed reaction is D-sedoheptulose 1,7-bisphosphate + H2O = D-sedoheptulose 7-phosphate + phosphate. It participates in carbohydrate biosynthesis; Calvin cycle. Its function is as follows. Catalyzes the hydrolysis of fructose 1,6-bisphosphate (Fru 1,6-P2) and sedoheptulose 1,7-bisphosphate (Sed 1,7-P2) to fructose 6-phosphate and sedoheptulose 7-phosphate, respectively. The protein is D-fructose 1,6-bisphosphatase class 2/sedoheptulose 1,7-bisphosphatase of Crocosphaera subtropica (strain ATCC 51142 / BH68) (Cyanothece sp. (strain ATCC 51142)).